A 309-amino-acid polypeptide reads, in one-letter code: Probable non-structural 36.3 kDa protein (309 aa).

This chain is Probable non-structural 36.3 kDa protein (S6), found in Avena sativa (Oat).